Reading from the N-terminus, the 147-residue chain is Globin (147 aa).

Residues 2-147 (SFSAAQVDTV…SVANGIGQYQ (146 aa)) form the Globin domain. Heme b-binding residues include histidine 64 and histidine 95.

This sequence belongs to the globin family. Homodimer or homooligomer.

In Aequiyoldia eightsii (Antarctic yoldia), this protein is Globin.